Here is a 273-residue protein sequence, read N- to C-terminus: Transposable element Tcb1 transposase (273 aa).

It belongs to the transposase 5 family.

It localises to the nucleus. Probably essential for transposable element Tcb1 transposition. The insertion of Tcb1 is the main cause of spontaneous mutations. This chain is Transposable element Tcb1 transposase, found in Caenorhabditis briggsae.